The primary structure comprises 484 residues: Replication factor C large subunit (484 aa).

Residue 46–53 (GPPGSGKT) coordinates ATP. Basic and acidic residues-rich tracts occupy residues 419–432 (VKTETPKKKEKTKE), 442–451 (RISEPPEPLK), and 459–478 (KSVEKADTKEKEKKDPKKQA). The segment at 419–484 (VKTETPKKKE…KKQATLDSFF (66 aa)) is disordered.

Belongs to the activator 1 small subunits family. RfcL subfamily. In terms of assembly, heteromultimer composed of small subunits (RfcS) and large subunits (RfcL).

In terms of biological role, part of the RFC clamp loader complex which loads the PCNA sliding clamp onto DNA. This Methanococcus maripaludis (strain C5 / ATCC BAA-1333) protein is Replication factor C large subunit.